Reading from the N-terminus, the 226-residue chain is MDPGKEGLPRKPRFSAQQLHVGKWLSPFFFTCAVYFLLWIPDDQPSWVGALVKCLPVLSLVVFLRAVDAGGGYSARLQGALLCSAVGDACLVWPEAFLHGVAAFAAAHLLYLWAFGLTPLQPGLLLLVILAALPYYGLLLWHLPPDLVLALTAYSLALATMLWRGLARGGSTGWGALLFTLSDTTLAWNAFAQPLPHARLVVMTTYYSAQVLISLSVSQSPKLKPN.

Topologically, residues 1–23 (MDPGKEGLPRKPRFSAQQLHVGK) are cytoplasmic. A helical membrane pass occupies residues 24–40 (WLSPFFFTCAVYFLLWI). Over 41-46 (PDDQPS) the chain is Extracellular. A helical transmembrane segment spans residues 47 to 64 (WVGALVKCLPVLSLVVFL). Over 65 to 76 (RAVDAGGGYSAR) the chain is Cytoplasmic. A helical membrane pass occupies residues 77-93 (LQGALLCSAVGDACLVW). The Extracellular segment spans residues 94–99 (PEAFLH). Residues 100 to 117 (GVAAFAAAHLLYLWAFGL) traverse the membrane as a helical segment. At 118-123 (TPLQPG) the chain is on the cytoplasmic side. Residues 124–140 (LLLLVILAALPYYGLLL) form a helical membrane-spanning segment. At 141–146 (WHLPPD) the chain is on the extracellular side. A helical membrane pass occupies residues 147–163 (LVLALTAYSLALATMLW). The Cytoplasmic segment spans residues 164–171 (RGLARGGS). Residues 172 to 188 (TGWGALLFTLSDTTLAW) traverse the membrane as a helical segment. Topologically, residues 189 to 199 (NAFAQPLPHAR) are extracellular. A helical membrane pass occupies residues 200–217 (LVVMTTYYSAQVLISLSV). Topologically, residues 218–226 (SQSPKLKPN) are cytoplasmic.

The protein belongs to the TMEM86 family. In terms of assembly, homodimer.

The protein localises to the endoplasmic reticulum membrane. It is found in the cytoplasm. The enzyme catalyses a 1-O-(1Z-alkenyl)-sn-glycero-3-phosphocholine + H2O = a 2,3-saturated aldehyde + sn-glycerol 3-phosphocholine. It carries out the reaction a 1-O-(1Z-alkenyl)-sn-glycero-3-phosphoethanolamine + H2O = a 2,3-saturated aldehyde + sn-glycero-3-phosphoethanolamine. Competitively inhibited by lysophosphatidic acid. Its function is as follows. Catalyzes the hydrolysis of the vinyl ether bond of choline or ethanolamine lysoplasmalogens, forming fatty aldehyde and glycerophosphocholine or glycerophosphoethanolamine, respectively and is specific for the sn-2-deacylated (lyso) form of plasmalogen. The chain is Lysoplasmalogenase TMEM86B (TMEM86B) from Sus scrofa (Pig).